The chain runs to 147 residues: Hemoglobin subunit epsilon (147 aa).

The Globin domain occupies 3-147 (HFTAEEKAAV…VAIALAHKYH (145 aa)). Serine 14 and serine 51 each carry phosphoserine. Histidine 64 and histidine 93 together coordinate heme b.

Belongs to the globin family. As to quaternary structure, heterotetramer of two alpha chains and two epsilon chains in early embryonic hemoglobin Gower-2; two zeta chains and two epsilon chains in early embryonic hemoglobin Gower-1. In terms of tissue distribution, red blood cells.

In terms of biological role, the epsilon chain is a beta-type chain of early mammalian embryonic hemoglobin. The protein is Hemoglobin subunit epsilon (HBE1) of Pongo pygmaeus (Bornean orangutan).